Here is a 360-residue protein sequence, read N- to C-terminus: N5-carboxyaminoimidazole ribonucleotide synthase (360 aa).

Residues Arg-98, Lys-138, 143–149, 173–176, Glu-181, His-204, and 255–256 contribute to the ATP site; these read GYDGKGQ, EGFV, and NE. In terms of domain architecture, ATP-grasp spans 102 to 285; sequence KSMFKDLGIP…QFENHLRAVA (184 aa).

It belongs to the PurK/PurT family. In terms of assembly, homodimer.

The catalysed reaction is 5-amino-1-(5-phospho-beta-D-ribosyl)imidazole + hydrogencarbonate + ATP = 5-carboxyamino-1-(5-phospho-D-ribosyl)imidazole + ADP + phosphate + 2 H(+). It participates in purine metabolism; IMP biosynthesis via de novo pathway; 5-amino-1-(5-phospho-D-ribosyl)imidazole-4-carboxylate from 5-amino-1-(5-phospho-D-ribosyl)imidazole (N5-CAIR route): step 1/2. In terms of biological role, catalyzes the ATP-dependent conversion of 5-aminoimidazole ribonucleotide (AIR) and HCO(3)(-) to N5-carboxyaminoimidazole ribonucleotide (N5-CAIR). The protein is N5-carboxyaminoimidazole ribonucleotide synthase of Pseudomonas aeruginosa (strain ATCC 15692 / DSM 22644 / CIP 104116 / JCM 14847 / LMG 12228 / 1C / PRS 101 / PAO1).